The sequence spans 318 residues: Glycine--tRNA ligase alpha subunit (318 aa).

Belongs to the class-II aminoacyl-tRNA synthetase family. Tetramer of two alpha and two beta subunits.

It is found in the cytoplasm. The enzyme catalyses tRNA(Gly) + glycine + ATP = glycyl-tRNA(Gly) + AMP + diphosphate. The chain is Glycine--tRNA ligase alpha subunit from Chelativorans sp. (strain BNC1).